The chain runs to 68 residues: Large ribosomal subunit protein uL29 (68 aa).

The protein belongs to the universal ribosomal protein uL29 family.

The protein is Large ribosomal subunit protein uL29 of Wigglesworthia glossinidia brevipalpis.